Here is a 181-residue protein sequence, read N- to C-terminus: 3-isopropylmalate dehydratase small subunit (181 aa).

Belongs to the LeuD family. LeuD type 2 subfamily. In terms of assembly, heterodimer of LeuC and LeuD.

The catalysed reaction is (2R,3S)-3-isopropylmalate = (2S)-2-isopropylmalate. It participates in amino-acid biosynthesis; L-leucine biosynthesis; L-leucine from 3-methyl-2-oxobutanoate: step 2/4. Functionally, catalyzes the isomerization between 2-isopropylmalate and 3-isopropylmalate, via the formation of 2-isopropylmaleate. In Deinococcus deserti (strain DSM 17065 / CIP 109153 / LMG 22923 / VCD115), this protein is 3-isopropylmalate dehydratase small subunit.